We begin with the raw amino-acid sequence, 373 residues long: Deoxyguanosinetriphosphate triphosphohydrolase-like protein 1 (373 aa).

Positions 21-43 are disordered; the sequence is RSSEARRAVPEAPSETRTAYQKD. Positions 76-198 constitute an HD domain; that stretch reads RLTHTLEVQQ…VDAADALAYT (123 aa).

It belongs to the dGTPase family. Type 2 subfamily.

This Deinococcus radiodurans (strain ATCC 13939 / DSM 20539 / JCM 16871 / CCUG 27074 / LMG 4051 / NBRC 15346 / NCIMB 9279 / VKM B-1422 / R1) protein is Deoxyguanosinetriphosphate triphosphohydrolase-like protein 1.